A 557-amino-acid chain; its full sequence is uncharacterized protein (557 aa).

The first 30 residues, 1-30, serve as a signal peptide directing secretion; that stretch reads MAPRRRRHTRIAGLRVVGTATLVAATTLTA. Cys31 carries the N-palmitoyl cysteine lipid modification. The S-diacylglycerol cysteine moiety is linked to residue Cys31.

It to M.bovis Mb2616c and M.leprae ML0489.

It is found in the cell membrane. This is an uncharacterized protein from Mycobacterium tuberculosis (strain CDC 1551 / Oshkosh).